The sequence spans 205 residues: Riboflavin kinase (205 aa).

Positions 1 to 24 (MRPDTSRDPVAGPDSGPEPPFPIR) are disordered. Thr44 and Asn46 together coordinate Mg(2+). The Nucleophile role is filled by Glu104.

The protein belongs to the flavokinase family. Zn(2+) is required as a cofactor. The cofactor is Mg(2+).

The enzyme catalyses riboflavin + ATP = FMN + ADP + H(+). Its pathway is cofactor biosynthesis; FMN biosynthesis; FMN from riboflavin (ATP route): step 1/1. Catalyzes the phosphorylation of riboflavin (vitamin B2) to form flavin mononucleotide (FMN) coenzyme. This Aspergillus terreus (strain NIH 2624 / FGSC A1156) protein is Riboflavin kinase (fmn1).